A 1007-amino-acid polypeptide reads, in one-letter code: Inversin-A (1007 aa).

ANK repeat units lie at residues 9-39 (SLAS…VIDQ), 43-72 (LGRT…QVNH), 76-105 (SGRT…DCTH), 109-140 (RDIT…QVDA), 144-173 (RKQT…NIGI), 177-209 (EGKI…TESL), 216-246 (EGRT…NVAP), 250-279 (LFRT…SPNI), 284-313 (QGAT…VRDE), 317-346 (EGRT…ELEV), 352-381 (YGGT…QVDA), 385-414 (MKHT…KVHL), 418-447 (DGRS…NPDA), 451-480 (EGRT…DPNI), 484-513 (NGRT…FPNQ), and 519-549 (ERYT…SIAA). Positions 486–494 (RTALHWSCN) match the D-box 1 motif. Residues 551-580 (QDIAASKIQAVYKGHKVRRAFQERKNLLMK) form the IQ 1 domain. 2 stretches are compositionally biased toward basic and acidic residues: residues 585–599 (RKGA…ENRQ) and 608–652 (GKQK…HQEE). Disordered regions lie at residues 585-837 (RKGA…KEFS) and 868-893 (SAKS…SALK). Positions 684–701 (IQSSPIEHVHTNSIQTRM) are enriched in polar residues. Residues 702–712 (SPSRTSISHSS) are compositionally biased toward low complexity. Residues 727–745 (NPTQNNTQPRRTSRPQIES) show a composition bias toward polar residues. Positions 751-771 (HRIEDLVQKESRRKSHREERK) are enriched in basic and acidic residues. The segment covering 772–784 (GSHRQRASSHHRL) has biased composition (basic residues). Residues 870-893 (KSGQRPLTETQSPEKACQGSSALK) are compositionally biased toward polar residues. Positions 964–972 (RKQLFQRKK) match the D-box 2 motif. The IQ 2 domain maps to 971–1000 (KKHAATVIQKAWRTYCIRKSSRKTRHSHLR).

As to quaternary structure, interacts with apc2. Binds calmodulin.

The protein localises to the cytoplasm. The protein resides in the cytoskeleton. Required for normal renal development and establishment of left-right axis. Probably acts as a molecular switch between different Wnt signaling pathways. Inhibits the canonical Wnt pathway by targeting cytoplasmic disheveled for degradation by the ubiquitin-proteasome. This suggests that it is required in renal development to oppose the repression of terminal differentiation of tubular epithelial cells by Wnt signaling. Plays a central role in convergent extension movements in gastrulating embryos, a processus regulated by Wnt signaling. This Xenopus laevis (African clawed frog) protein is Inversin-A (invs-a).